Here is a 187-residue protein sequence, read N- to C-terminus: Elongation factor P (187 aa).

At Lys-34 the chain carries N6-(3,6-diaminohexanoyl)-5-hydroxylysine.

Belongs to the elongation factor P family. May be beta-lysylated on the epsilon-amino group of Lys-34 by the combined action of EpmA and EpmB, and then hydroxylated on the C5 position of the same residue by EpmC (if this protein is present). Lysylation is critical for the stimulatory effect of EF-P on peptide-bond formation. The lysylation moiety may extend toward the peptidyltransferase center and stabilize the terminal 3-CCA end of the tRNA. Hydroxylation of the C5 position on Lys-34 may allow additional potential stabilizing hydrogen-bond interactions with the P-tRNA.

It is found in the cytoplasm. It participates in protein biosynthesis; polypeptide chain elongation. Involved in peptide bond synthesis. Alleviates ribosome stalling that occurs when 3 or more consecutive Pro residues or the sequence PPG is present in a protein, possibly by augmenting the peptidyl transferase activity of the ribosome. Modification of Lys-34 is required for alleviation. The polypeptide is Elongation factor P (Thioalkalivibrio sulfidiphilus (strain HL-EbGR7)).